Consider the following 483-residue polypeptide: Protein DETOXIFICATION 6 (483 aa).

12 helical membrane passes run 38-58 (ALPM…SVMV), 69-89 (GVAL…FGLA), 113-133 (FSAI…WFYM), 146-166 (ISKV…AQAV), 187-207 (AITT…AFGL), 211-231 (GAAL…ALYV), 263-283 (AAMT…SGLL), 292-312 (VLSI…GIGA), 334-354 (VFAG…LLFI), 376-396 (LSPL…LGGV), 405-425 (IGAW…GLFL), and 436-456 (LWIG…IVTA).

This sequence belongs to the multi antimicrobial extrusion (MATE) (TC 2.A.66.1) family.

The protein resides in the membrane. This Arabidopsis thaliana (Mouse-ear cress) protein is Protein DETOXIFICATION 6.